We begin with the raw amino-acid sequence, 527 residues long: Probable bifunctional methylthioribulose-1-phosphate dehydratase/enolase-phosphatase E1 (527 aa).

A methylthioribulose-1-phosphate dehydratase region spans residues 1-244 (MAAAAAPAVA…AIKLHQLGLD (244 aa)). Cysteine 116 contributes to the substrate binding site. Histidine 134 and histidine 136 together coordinate Zn(2+). Glutamate 159 acts as the Proton donor/acceptor; for methylthioribulose-1-phosphate dehydratase activity in catalysis. Histidine 209 lines the Zn(2+) pocket. Residues 288-527 (IVLDIEGTTT…FKTINSLSEI (240 aa)) are enolase-phosphatase E1. 2 residues coordinate Mg(2+): aspartate 291 and glutamate 293. Substrate contacts are provided by residues 426-427 (SS) and lysine 460. Position 486 (aspartate 486) interacts with Mg(2+).

This sequence in the N-terminal section; belongs to the aldolase class II family. MtnB subfamily. It in the C-terminal section; belongs to the HAD-like hydrolase superfamily. MasA/MtnC family. The cofactor is Zn(2+). It depends on Mg(2+) as a cofactor.

The enzyme catalyses 5-(methylsulfanyl)-D-ribulose 1-phosphate = 5-methylsulfanyl-2,3-dioxopentyl phosphate + H2O. The catalysed reaction is 5-methylsulfanyl-2,3-dioxopentyl phosphate + H2O = 1,2-dihydroxy-5-(methylsulfanyl)pent-1-en-3-one + phosphate. Its pathway is amino-acid biosynthesis; L-methionine biosynthesis via salvage pathway; L-methionine from S-methyl-5-thio-alpha-D-ribose 1-phosphate: step 2/6. It functions in the pathway amino-acid biosynthesis; L-methionine biosynthesis via salvage pathway; L-methionine from S-methyl-5-thio-alpha-D-ribose 1-phosphate: step 3/6. It participates in amino-acid biosynthesis; L-methionine biosynthesis via salvage pathway; L-methionine from S-methyl-5-thio-alpha-D-ribose 1-phosphate: step 4/6. The sequence is that of Probable bifunctional methylthioribulose-1-phosphate dehydratase/enolase-phosphatase E1 from Ricinus communis (Castor bean).